A 227-amino-acid polypeptide reads, in one-letter code: Cytidylate kinase (227 aa).

12–20 provides a ligand contact to ATP; sequence GPGGAGKGT.

Belongs to the cytidylate kinase family. Type 1 subfamily.

It is found in the cytoplasm. It catalyses the reaction CMP + ATP = CDP + ADP. It carries out the reaction dCMP + ATP = dCDP + ADP. The sequence is that of Cytidylate kinase from Klebsiella pneumoniae (strain 342).